Here is a 375-residue protein sequence, read N- to C-terminus: Putative F-box protein At5g52620 (375 aa).

One can recognise an F-box domain in the interval 5–52 (GKSDPIPIDIILDILSRLSTNSIAKFGLASKFCGSILRGQDFIELFLI).

The protein is Putative F-box protein At5g52620 of Arabidopsis thaliana (Mouse-ear cress).